A 306-amino-acid chain; its full sequence is N-acetylmuramic acid 6-phosphate etherase (306 aa).

In terms of domain architecture, SIS spans 62–225 (IAQAFQNGGR…TTASMIRIGK (164 aa)). Residue Glu90 is the Proton donor of the active site. Residue Glu121 is part of the active site.

The protein belongs to the GCKR-like family. MurNAc-6-P etherase subfamily. As to quaternary structure, homodimer.

It carries out the reaction N-acetyl-D-muramate 6-phosphate + H2O = N-acetyl-D-glucosamine 6-phosphate + (R)-lactate. The protein operates within amino-sugar metabolism; 1,6-anhydro-N-acetylmuramate degradation. Its pathway is amino-sugar metabolism; N-acetylmuramate degradation. It functions in the pathway cell wall biogenesis; peptidoglycan recycling. Functionally, specifically catalyzes the cleavage of the D-lactyl ether substituent of MurNAc 6-phosphate, producing GlcNAc 6-phosphate and D-lactate. Together with AnmK, is also required for the utilization of anhydro-N-acetylmuramic acid (anhMurNAc) either imported from the medium or derived from its own cell wall murein, and thus plays a role in cell wall recycling. In Vibrio atlanticus (strain LGP32) (Vibrio splendidus (strain Mel32)), this protein is N-acetylmuramic acid 6-phosphate etherase.